The chain runs to 285 residues: BAG family molecular chaperone regulator 2 (285 aa).

Positions 37–113 constitute a Ubiquitin-like domain; the sequence is RGIRVRVKYG…LILIEDPISQ (77 aa). In terms of domain architecture, BAG spans 132-210; that stretch reads AISDISFQVE…KYVEALDLLK (79 aa). At Ser-244 the chain carries Phosphoserine.

As to quaternary structure, binds to the ATPase domain of HSP70/HSC70 chaperones.

Its function is as follows. Co-chaperone that regulates diverse cellular pathways, such as programmed cell death and stress responses. In Arabidopsis thaliana (Mouse-ear cress), this protein is BAG family molecular chaperone regulator 2 (BAG2).